Consider the following 54-residue polypeptide: Ferredoxin (54 aa).

2 4Fe-4S ferredoxin-type domains span residues 2-25 (YVIN…IQQG) and 26-54 (SIYA…NPED). Cys8, Cys11, Cys14, Cys18, Cys35, Cys38, Cys41, and Cys45 together coordinate [4Fe-4S] cluster.

The cofactor is [4Fe-4S] cluster.

Functionally, ferredoxins are iron-sulfur proteins that transfer electrons in a wide variety of metabolic reactions. The protein is Ferredoxin of Peptoniphilus asaccharolyticus (Peptostreptococcus asaccharolyticus).